A 690-amino-acid chain; its full sequence is DNA ligase (690 aa).

NAD(+) contacts are provided by residues 36-40 (DAVYD), 85-86 (SL), and Glu-124. The N6-AMP-lysine intermediate role is filled by Lys-126. NAD(+)-binding residues include Arg-147, Glu-184, Lys-308, and Lys-332. Positions 426, 429, 444, and 449 each coordinate Zn(2+). Residues 614-690 (NQSNVFDGKS…INENELKLLL (77 aa)) enclose the BRCT domain.

Belongs to the NAD-dependent DNA ligase family. LigA subfamily. It depends on Mg(2+) as a cofactor. Mn(2+) serves as cofactor.

The catalysed reaction is NAD(+) + (deoxyribonucleotide)n-3'-hydroxyl + 5'-phospho-(deoxyribonucleotide)m = (deoxyribonucleotide)n+m + AMP + beta-nicotinamide D-nucleotide.. DNA ligase that catalyzes the formation of phosphodiester linkages between 5'-phosphoryl and 3'-hydroxyl groups in double-stranded DNA using NAD as a coenzyme and as the energy source for the reaction. It is essential for DNA replication and repair of damaged DNA. The polypeptide is DNA ligase (Prochlorococcus marinus (strain NATL1A)).